Here is a 153-residue protein sequence, read N- to C-terminus: Pheromone-binding protein Gp-9 (153 aa).

The N-terminal stretch at 1-19 (MKTFVLHIFIFALVAFASA) is a signal peptide. 3 disulfide bridges follow: C37/C77, C73/C129, and C118/C138.

The protein belongs to the PBP/GOBP family. In terms of assembly, homodimer.

The protein resides in the secreted. Its function is as follows. Colony queen number, a major feature of social organization, is associated with worker genotype for Gp-9. Colonies are headed by either a single reproductive queen (monogyne form) or multiple queens (polygyne form). Differences in worker Gp-9 genotypes between social forms may cause differences in workers' abilities to recognize queens and regulate their numbers. The chain is Pheromone-binding protein Gp-9 from Solenopsis daguerrei (Workerless parasitic ant).